Here is a 506-residue protein sequence, read N- to C-terminus: Cytochrome P450 94B3 (506 aa).

The helical transmembrane segment at 2-22 threads the bilayer; the sequence is AFLLSFLILAFLITIIFFLSS. Residue cysteine 447 coordinates heme.

The protein belongs to the cytochrome P450 family. The cofactor is heme.

The protein localises to the membrane. The protein resides in the endoplasmic reticulum membrane. The enzyme catalyses a jasmonyl-L-amino acid + reduced [NADPH--hemoprotein reductase] + O2 = a 12-hydroxyjasmonyl-L-alpha-amino acid + oxidized [NADPH--hemoprotein reductase] + H2O + H(+). The catalysed reaction is L-isoleucine-(+)-7-isojasmonate + NADPH + O2 + H(+) = L-isoleucine-(+)-12-hydroxy-7-isojasmonate + NADP(+) + H2O. It catalyses the reaction a jasmonyl-L-isoleucinate + NADPH + O2 + H(+) = L-isoleucine-12-hydroxyjasmonate + NADP(+) + H2O. Its function is as follows. Hydroxylase involved in the oxidation of the plant hormone jasmonoyl-L-isoleucine (JA-Ile), a bioactive phytohormone of the jasmonate-mediated signaling pathway. Converts JA-Ile to 12-hydroxy-JA-Ile. Exerts negative feedback control on JA-Ile levels and plays a key role in attenuation of jasmonate responses. Negatively regulates the expression of wound-induced genes TIFY11A/JAZ5, TIFY5A/JAZ8 and TIFY5A/JAZ10. Catalyzes the hydroxylation of jasmonoyl-L-valine (JA-Val), jasmonoyl-L-leucine (JA-Leu) and jasmonoyl-L-phenylalanine (JA-Phe) in vitro. Converts JA-Val, JA-Leu and JA-Phe to 12-hydroxy-JA-Val, 12-hydroxy-JA-Leu and 12-hydroxy-JA-Phe, respectively. This chain is Cytochrome P450 94B3, found in Arabidopsis thaliana (Mouse-ear cress).